We begin with the raw amino-acid sequence, 224 residues long: Putative gastrointestinal growth factor xP4 (224 aa).

Residues 1 to 17 (MANSVFWAIAVALVLGA) form the signal peptide. P-type domains lie at 25–68 (YRCG…YTPW), 73–117 (TICN…YQPI), 123–167 (RDCS…FKPE), and 173–216 (LQCA…FYPD). 12 disulfides stabilise this stretch: Cys27–Cys53, Cys37–Cys52, Cys47–Cys64, Cys75–Cys102, Cys86–Cys101, Cys96–Cys113, Cys125–Cys152, Cys136–Cys151, Cys146–Cys163, Cys175–Cys201, Cys185–Cys200, and Cys195–Cys212. A glycan (N-linked (GlcNAc...) asparagine) is linked at Asn104.

In terms of processing, glycosylated. As to expression, stomach mucosa.

It localises to the secreted. In terms of biological role, may act as a growth factor. The sequence is that of Putative gastrointestinal growth factor xP4 (p4) from Xenopus laevis (African clawed frog).